An 834-amino-acid chain; its full sequence is Probable basic-leucine zipper transcription factor D (834 aa).

The tract at residues 83–160 is disordered; the sequence is NNNNMLNDHS…SNNNSSSEGE (78 aa). The segment covering 90 to 111 has biased composition (polar residues); that stretch reads DHSSSPMRVPNSSPSLYNNSIE. Over residues 119 to 157 the composition is skewed to low complexity; that stretch reads DNSNNNNNNNNNINVNDINVNDINSNSTNNNESNNNSSS. Positions 211–246 form a coiled coil; that stretch reads SEQQQQQQQQQQQQQQQQQQQQQQQQQHQHLLQEHQ. The tract at residues 378 to 405 is disordered; sequence VVDPPTHNQEDERNVKKQRRLIKNRESA. Residues 391 to 454 enclose the bZIP domain; that stretch reads NVKKQRRLIK…KQLAAQNSNS (64 aa). A basic motif region spans residues 393 to 402; sequence KKQRRLIKNR. The leucine-zipper stretch occupies residues 407 to 414; sequence LSRMRKKI. Disordered regions lie at residues 455 to 504 and 550 to 712; these read NNNS…QQQS and LSMS…KTPQ. Residues 550–595 show a composition bias toward polar residues; that stretch reads LSMSDSESSPQKSLRLSSNHHSLPDGTFNTIPIDQQTTATTNTKSL. Composition is skewed to low complexity over residues 616–651 and 694–707; these read NNNN…NNNN and TTTT…TTST.

Belongs to the bZIP family.

It is found in the nucleus. In terms of biological role, probable transcriptional regulator. The polypeptide is Probable basic-leucine zipper transcription factor D (bzpD) (Dictyostelium discoideum (Social amoeba)).